The sequence spans 163 residues: Peptide deformylase 3 (163 aa).

Positions 91 and 133 each coordinate Fe cation. Glutamate 134 is a catalytic residue. Histidine 137 contacts Fe cation.

This sequence belongs to the polypeptide deformylase family. The cofactor is Fe(2+).

It carries out the reaction N-terminal N-formyl-L-methionyl-[peptide] + H2O = N-terminal L-methionyl-[peptide] + formate. Removes the formyl group from the N-terminal Met of newly synthesized proteins. Requires at least a dipeptide for an efficient rate of reaction. N-terminal L-methionine is a prerequisite for activity but the enzyme has broad specificity at other positions. This chain is Peptide deformylase 3, found in Shewanella oneidensis (strain ATCC 700550 / JCM 31522 / CIP 106686 / LMG 19005 / NCIMB 14063 / MR-1).